Here is a 614-residue protein sequence, read N- to C-terminus: Zinc finger protein ztf-7 (614 aa).

Residues 1–10 (MSTSGSGGGN) are compositionally biased toward gly residues. The tract at residues 1-160 (MSTSGSGGGN…SRPKKPEKMS (160 aa)) is disordered. The span at 18-41 (NVASSPNANPKKNADTESSGGSKN) shows a compositional bias: polar residues. Residues 54 to 69 (GSNSRNGSRTNSVSNS) are compositionally biased toward low complexity. The segment covering 74–83 (NRKDWTDRKS) has biased composition (basic and acidic residues). A compositionally biased stretch (acidic residues) spans 132-150 (DYSDEYELDEPFSDSDDED). 2 consecutive C2H2-type zinc fingers follow at residues 356 to 380 (NECI…KRNH) and 447 to 470 (VVCL…KTTH).

Belongs to the ZNF277 family. As to quaternary structure, interacts with rps-2.

The protein localises to the cytoplasm. In terms of biological role, probable transcription factor. Limits the ability to tolerate cold environment or cold-warm stress. In complex with rps-2, mediates the cold-warm shock response by promoting translocation of components of the RNA exosome from the nucleolus to nucleoplasm. The chain is Zinc finger protein ztf-7 from Caenorhabditis elegans.